A 176-amino-acid polypeptide reads, in one-letter code: Shikimate kinase (176 aa).

14–19 (GAGKST) provides a ligand contact to ATP. Ser-18 provides a ligand contact to Mg(2+). Substrate contacts are provided by Asp-36, Arg-60, and Gly-83. Residue Arg-121 coordinates ATP. Arg-140 is a binding site for substrate.

The protein belongs to the shikimate kinase family. Monomer. The cofactor is Mg(2+).

The protein localises to the cytoplasm. The enzyme catalyses shikimate + ATP = 3-phosphoshikimate + ADP + H(+). Its pathway is metabolic intermediate biosynthesis; chorismate biosynthesis; chorismate from D-erythrose 4-phosphate and phosphoenolpyruvate: step 5/7. Catalyzes the specific phosphorylation of the 3-hydroxyl group of shikimic acid using ATP as a cosubstrate. The polypeptide is Shikimate kinase (Francisella tularensis subsp. tularensis (strain FSC 198)).